Here is a 264-residue protein sequence, read N- to C-terminus: Protein FAM228B (264 aa).

Belongs to the FAM228 family.

In Bos taurus (Bovine), this protein is Protein FAM228B (FAM228B).